A 702-amino-acid polypeptide reads, in one-letter code: Ribosomal RNA large subunit methyltransferase K/L (702 aa).

Positions 43 to 154 (LVYQSLMWSR…KETASIALDL (112 aa)) constitute a THUMP domain.

The protein belongs to the methyltransferase superfamily. RlmKL family.

The protein resides in the cytoplasm. The catalysed reaction is guanosine(2445) in 23S rRNA + S-adenosyl-L-methionine = N(2)-methylguanosine(2445) in 23S rRNA + S-adenosyl-L-homocysteine + H(+). It carries out the reaction guanosine(2069) in 23S rRNA + S-adenosyl-L-methionine = N(2)-methylguanosine(2069) in 23S rRNA + S-adenosyl-L-homocysteine + H(+). Its function is as follows. Specifically methylates the guanine in position 2445 (m2G2445) and the guanine in position 2069 (m7G2069) of 23S rRNA. The protein is Ribosomal RNA large subunit methyltransferase K/L of Escherichia coli O6:H1 (strain CFT073 / ATCC 700928 / UPEC).